The primary structure comprises 176 residues: ATP-dependent protease subunit HslV (176 aa).

Thr2 is a catalytic residue. Gly157, Cys160, and Thr163 together coordinate Na(+).

Belongs to the peptidase T1B family. HslV subfamily. As to quaternary structure, a double ring-shaped homohexamer of HslV is capped on each side by a ring-shaped HslU homohexamer. The assembly of the HslU/HslV complex is dependent on binding of ATP.

It is found in the cytoplasm. The catalysed reaction is ATP-dependent cleavage of peptide bonds with broad specificity.. Its activity is regulated as follows. Allosterically activated by HslU binding. Its function is as follows. Protease subunit of a proteasome-like degradation complex believed to be a general protein degrading machinery. This Pseudomonas fluorescens (strain SBW25) protein is ATP-dependent protease subunit HslV.